Reading from the N-terminus, the 317-residue chain is MGLAGPKKRTKISHDPNNIAWSRSTTGYGHRIMSAQGWTPGAFLGAPGAAHSSCYTAASASHIRVVLKDDTLGLGARPRNPLAEDEPTGLDAFQDLLGRLNGKSEVELVKEQRRREDIKLLSFVERRWKSMAFVPGGYLVKEDPARTLVVAEQANKDDSSDPKSRQETTQKRPKKEKRKEKSRHREEPIDSRSISSKPERGTINSANQTSDDESTNIVPSESKSRKKEKKKKSKKRKMDEVNEEESVPDGRIGCKGILPNKQSAQQSTGERYISGDSMINAREHRPLGRQVIRSRYIQQKKMALLDAKSLNEIFMTS.

In terms of domain architecture, G-patch spans 25 to 79; it reads TTGYGHRIMSAQGWTPGAFLGAPGAAHSSCYTAASASHIRVVLKDDTLGLGARPR. The tract at residues 152–268 is disordered; that stretch reads EQANKDDSSD…PNKQSAQQST (117 aa). Residues 154 to 170 show a composition bias toward basic and acidic residues; the sequence is ANKDDSSDPKSRQETTQ. The span at 171–182 shows a compositional bias: basic residues; that stretch reads KRPKKEKRKEKS. Residues 192-219 are compositionally biased toward polar residues; sequence RSISSKPERGTINSANQTSDDESTNIVP. The span at 224–236 shows a compositional bias: basic residues; the sequence is SRKKEKKKKSKKR.

The protein belongs to the PINX1 family.

The protein localises to the nucleus. Its subcellular location is the nucleolus. Functionally, involved in rRNA-processing at A0, A1 and A2 sites and negatively regulates telomerase. The polypeptide is Protein PXR1 (PXR1) (Coccidioides immitis (strain RS) (Valley fever fungus)).